We begin with the raw amino-acid sequence, 452 residues long: Lichenan permease IIC component (452 aa).

A PTS EIIC type-3 domain is found at 8–421 (LEEKVMPIAG…AVSFVVYYPF (414 aa)). The next 10 membrane-spanning stretches (helical) occupy residues 31 to 51 (GIIL…IGNL), 72 to 92 (LAYP…FGIA), 104 to 124 (LSAG…QVPF), 138 to 158 (GIPL…IAMV), 187 to 207 (FVAL…RLIV), 218 to 238 (IVSV…GGSL), 246 to 266 (LLWA…APIW), 291 to 311 (FFDI…VVTM), 351 to 373 (LLLP…MSTG), and 402 to 422 (SGAV…YPFF).

It is found in the cell membrane. Functionally, the phosphoenolpyruvate-dependent sugar phosphotransferase system (PTS), a major carbohydrate active -transport system, catalyzes the phosphorylation of incoming sugar substrates concomitant with their translocation across the cell membrane. This system is involved in lichenan transport. This chain is Lichenan permease IIC component (licC), found in Bacillus subtilis (strain 168).